Here is a 2442-residue protein sequence, read N- to C-terminus: Piezo-type mechanosensitive ion channel component 1 (2442 aa).

Residues 1 to 5 (MTVPP) lie on the Extracellular side of the membrane. The helical transmembrane segment at 6–26 (LLKSCVVKLLLPAALLAAAII) threads the bilayer. Arg27 is a topological domain (cytoplasmic). A helical membrane pass occupies residues 28-48 (PSFLSIGYVLLALVSAVLPPI). Topologically, residues 49-56 (RKSLALPK) are extracellular. Residues 57-77 (LVGTFVIITFLFCLAVALGVG) traverse the membrane as a helical segment. Over 78 to 122 (SYQISEQVVHKNDRTYICNRSDTTLFRSIGLVRFHPTGTFESTRA) the chain is Cytoplasmic. The helical transmembrane segment at 123-143 (FLPEIIATSAALLTIIIVMFL) threads the bilayer. Topologically, residues 144 to 173 (SHRDEQLDVVGDVVTVRSESGREQRRQRKL) are extracellular. Residues 174-196 (AAIMWSAIGNSLRRLTNFVLFLF) traverse the membrane as a helical segment. Topologically, residues 197 to 198 (TA) are cytoplasmic. A helical membrane pass occupies residues 199–219 (YVGIVKPSLSNSIYFLAFLFI). Residues 220–239 (STWWSTYTPLRHGVYNQIKK) are Extracellular-facing. Residues 240-260 (FLIFYSALHFLVLYTYQIPIV) form a helical membrane-spanning segment. The Cytoplasmic segment spans residues 261-303 (HHSWLPTGSFLPRLFGLTVLMDSSCPEWWKFPFVAPDFNDDDL). A helical transmembrane segment spans residues 304–324 (IMKWPLYANPIVVLVFFYLTV). At 325–454 (AQYKFTRNGS…GDKESAASKG (130 aa)) the chain is on the extracellular side. Asn332, Asn392, and Asn440 each carry an N-linked (GlcNAc...) asparagine glycan. The segment at 389-417 (LLSNASSSANDDEQGRARSRSPLRNGEEQ) is disordered. Residues 455-475 (MIAVMTFVIFHSYSIALTAMM) traverse the membrane as a helical segment. Residues 476-478 (TWA) lie on the Cytoplasmic side of the membrane. Residues 479-499 (LLYHSIFGLILLILTCILWIF) form a helical membrane-spanning segment. Topologically, residues 500 to 506 (RDTRKSS) are extracellular. Residues 507 to 527 (FAMAPIILMYIEFLLILQYFL) traverse the membrane as a helical segment. Over 528–552 (SMDIHAEIGDPAWMNFVGIEWTTLP) the chain is Cytoplasmic. The chain crosses the membrane as a helical span at residues 553-573 (VHAVIILCVQTLLTLPVFLLL). The Extracellular segment spans residues 574 to 633 (RLARREKFYESLSDYERQRRINSYGTFGASKTGAGGVAVAKFQDPKSRKFAAFVEYLSNK). A helical membrane pass occupies residues 634-654 (VSVYFIFVVSVVLLVVSTCFA). The Cytoplasmic segment spans residues 655–656 (PN). A helical transmembrane segment spans residues 657-677 (FYNILFFALWALNLIYLKFSF). Residues 678 to 683 (RLYRGL) lie on the Extracellular side of the membrane. The chain crosses the membrane as a helical span at residues 684–704 (AYAFWLTLTFYTSIVIIALYI). Residues 705-739 (YQFPGVSQWIIRNTSLSQEWLNAIGLVDFRAIGES) are Cytoplasmic-facing. The chain crosses the membrane as a helical span at residues 740–760 (GALFLQLLAPIALFVVTMLQL). The Extracellular portion of the chain corresponds to 761-832 (KFFHGPWSRA…WRFFEVHISK (72 aa)). Positions 768 to 798 (SRATSPRRAENDPPTSTTEAAAVASTSGTQG) are disordered. Low complexity predominate over residues 782–794 (TSTTEAAAVASTS). A glycan (N-linked (GlcNAc...) asparagine) is linked at Asn816. A helical transmembrane segment spans residues 833–853 (IVFVIIAIFIANNINALYIPL). At 854–874 (VILLSLAICLPSAADGIFSLF) the chain is on the cytoplasmic side. A helical transmembrane segment spans residues 875 to 895 (MCAYLFLVALSKMIYQLDIVP). Residues 896–931 (ELSQIDRGVGADNCSHGNISMPEWFGLKKEVEGTEP) are Extracellular-facing. 2 N-linked (GlcNAc...) asparagine glycosylation sites follow: Asn908 and Asn913. The helical transmembrane segment at 932 to 952 (IYMLFGVIVSIIALAFQSIVI) threads the bilayer. At 953 to 990 (YRQRHYRASLGLPESMRAKVFPDFHHSHFDRSLKNAIQ) the chain is on the cytoplasmic side. A helical membrane pass occupies residues 991-1011 (FLIDYGFYKFGLEITMIAIGI). Residue Asp1012 is a topological domain, extracellular. A helical transmembrane segment spans residues 1013–1033 (IFNRMDALAAIQCFWLVLFAL). The Cytoplasmic portion of the chain corresponds to 1034 to 1041 (NKRVFVRR). Residues 1042–1062 (IWVFYVIYMAILYPLQFFSYV) traverse the membrane as a helical segment. The Extracellular segment spans residues 1063 to 1096 (GLPPDSCIEYPWSYWIPSYSDDARFNLSYLLNLS). Residues Asn1088 and Asn1094 are each glycosylated (N-linked (GlcNAc...) asparagine). A helical transmembrane segment spans residues 1097-1117 (IYGVNWPSAYLIGDFFVLLLA). Over 1118 to 1160 (SCQLAVFRREGEDNDSIYNDGNFVIKPENPQYDFIDTKKSYVD) the chain is Cytoplasmic. A helical membrane pass occupies residues 1161–1181 (YFKSFVFHYGHWITLMSTLAA). Topologically, residues 1182–1187 (GIAGTS) are extracellular. Residues 1188 to 1210 (LFALGYIIFTLTMLWSGNNLYVM) form a helical membrane-spanning segment. At 1211–1231 (NSTLRSFEHTLKRWNALLGYT) the chain is on the cytoplasmic side. A helical transmembrane segment spans residues 1232–1252 (LFTITMKVCLQIFGCVFLSWF). Residues 1253 to 1299 (DQSGGWGKTLCIVRQLFSITCVNNECHVLKELEDFSKACAVETKEGN) are Extracellular-facing. A helical membrane pass occupies residues 1300-1320 (IGFDVIALSFLVFQIRIFHSW). The Cytoplasmic portion of the chain corresponds to 1321 to 1615 (YFQHCMVEYR…VVNCIGAHTD (295 aa)). The segment at 1463–1502 (DTIKDPDSRALIAVSEPEARKPGGTEETDGDEDEDNKDSK) is disordered. Residues 1488-1498 (EETDGDEDEDN) show a composition bias toward acidic residues. Residues 1616–1636 (ILCYFFAIMTQVMTGGLITLP) traverse the membrane as a helical segment. At 1637-1654 (LPLMSLFWGNLSNPRPSK) the chain is on the extracellular side. Residue Asn1646 is glycosylated (N-linked (GlcNAc...) asparagine). Residues 1655–1675 (FFWVTMITYTECVIVIKFVCQ) traverse the membrane as a helical segment. Topologically, residues 1676–1706 (FAFMPYNSITWRTEHQMDPMSLDKLFGVSQR) are cytoplasmic. A helical membrane pass occupies residues 1707-1727 (DSFALWDIVLLFSLFFHRYML). Residues 1728–1833 (RKLGLWKDAN…KFRYIRDLYP (106 aa)) are Extracellular-facing. The N-linked (GlcNAc...) asparagine glycan is linked to Asn1737. A helical transmembrane segment spans residues 1834–1854 (IMFGIDVICFLIMTFGYSAFG). The Cytoplasmic portion of the chain corresponds to 1855 to 1866 (EGGSGNVLDDVK). The chain crosses the membrane as a helical span at residues 1867–1887 (ASRIPVTLVVMLVGMTLAIII). At 1888 to 1900 (DRALYLRKSVVGK) the chain is on the extracellular side. The helical transmembrane segment at 1901–1921 (LIYQVLMIAFLHIWVFLVLPN) threads the bilayer. Residues 1922–1930 (MTRRSAISN) lie on the Cytoplasmic side of the membrane. Residues 1931–1951 (HVAQALYVIKSCYFLVSAWQI) traverse the membrane as a helical segment. The Extracellular portion of the chain corresponds to 1952–2046 (RNGYPELCIG…KGKLVKYMMG (95 aa)). The helical transmembrane segment at 2047-2067 (FPIIIGVVIFIFSPLLLWSLL) threads the bilayer. Residues 2068–2346 (NQIGTISMPE…VGFIDRAFPS (279 aa)) are Cytoplasmic-facing. Residues 2347–2367 (FLAKVFKGGVIAVYLSVILVV) form a helical membrane-spanning segment. Topologically, residues 2368 to 2442 (GRGLVRGIFT…WTRMSKKKQE (75 aa)) are extracellular.

Belongs to the PIEZO (TC 1.A.75) family. As to expression, expressed in the pharyngeal-intestinal and spermathecal-uterine valves and in multiple reproductive tissues including the germline, somatic oviduct, and spermatheca. During reproduction, it is expressed in sheath cells, sperm, both spermathecal valves and the spermathecal bag cells.

The protein localises to the cell membrane. Its function is as follows. Pore-forming subunit of a mechanosensitive non-specific cation channel. Generates currents characterized by a linear current-voltage relationship. Plays a role in reproduction by positively regulating inter-tissue signaling to promote oocyte maturation, ovulation and fertilization, and sperm navigation from and to the spermatheca. May play a role in regulating cytosolic and endoplasmic reticulum calcium ion release. This is Piezo-type mechanosensitive ion channel component 1 from Caenorhabditis elegans.